A 142-amino-acid polypeptide reads, in one-letter code: MQPAGISHSLFPSLPPEFLPLALYTLAASILIGVLLLAAWWLGAKTTNRNKELPYESGAIPTGSARLAYPVPFYLIAIFFIVFDVEAAFIFAWATAWRELGLQGLVHITFFIVILLLGLVWLWLKGGLDWGPSRARRGHVRD.

3 helical membrane-spanning segments follow: residues 18–38, 73–93, and 104–124; these read FLPL…LLLA, FYLI…IFAW, and GLVH…WLWL.

It belongs to the complex I subunit 3 family. In terms of assembly, NDH-1 is composed of 14 different subunits. Subunits NuoA, H, J, K, L, M, N constitute the membrane sector of the complex.

Its subcellular location is the cell inner membrane. It catalyses the reaction a quinone + NADH + 5 H(+)(in) = a quinol + NAD(+) + 4 H(+)(out). Functionally, NDH-1 shuttles electrons from NADH, via FMN and iron-sulfur (Fe-S) centers, to quinones in the respiratory chain. The immediate electron acceptor for the enzyme in this species is believed to be ubiquinone. Couples the redox reaction to proton translocation (for every two electrons transferred, four hydrogen ions are translocated across the cytoplasmic membrane), and thus conserves the redox energy in a proton gradient. The chain is NADH-quinone oxidoreductase subunit A 2 from Geobacter sulfurreducens (strain ATCC 51573 / DSM 12127 / PCA).